A 426-amino-acid polypeptide reads, in one-letter code: Enolase (426 aa).

Gln163 serves as a coordination point for (2R)-2-phosphoglycerate. Glu205 functions as the Proton donor in the catalytic mechanism. Mg(2+)-binding residues include Asp242, Glu285, and Asp312. Lys337, Arg366, Ser367, and Lys388 together coordinate (2R)-2-phosphoglycerate. The active-site Proton acceptor is Lys337.

It belongs to the enolase family. Requires Mg(2+) as cofactor.

It is found in the cytoplasm. It localises to the secreted. The protein resides in the cell surface. The enzyme catalyses (2R)-2-phosphoglycerate = phosphoenolpyruvate + H2O. It functions in the pathway carbohydrate degradation; glycolysis; pyruvate from D-glyceraldehyde 3-phosphate: step 4/5. Catalyzes the reversible conversion of 2-phosphoglycerate (2-PG) into phosphoenolpyruvate (PEP). It is essential for the degradation of carbohydrates via glycolysis. This chain is Enolase, found in Rhodospirillum centenum (strain ATCC 51521 / SW).